A 104-amino-acid chain; its full sequence is ADIVMTQTPASVSEPVGGTVTIKCQASQSIFBBLAWYQKPGZPPKGLLYTBYTLASGVSSRFSGGGSGTBFTLTISDLECABAATYYCEXTGVSZBXBKGFGGG.

The tract at residues 1–24 is framework-1; it reads ADIVMTQTPASVSEPVGGTVTIKC. The interval 25–35 is complementarity-determining-1; sequence QASQSIFBBLA. Positions 36–49 are framework-2; it reads WYQKPGZPPKGLLY. Positions 50 to 56 are complementarity-determining-2; that stretch reads TBYTLAS. Residues 57–88 form a framework-3 region; the sequence is GVSSRFSGGGSGTBFTLTISDLECABAATYYC. A complementarity-determining-3 region spans residues 89–100; sequence EXTGVSZBXBKG. The tract at residues 101–104 is framework-4; the sequence is FGGG.

The polypeptide is Ig kappa chain V region XP-1 (Oryctolagus cuniculus (Rabbit)).